The primary structure comprises 499 residues: Probable cytosol aminopeptidase (499 aa).

Lys267 and Asp272 together coordinate Mn(2+). Lys279 is an active-site residue. Mn(2+)-binding residues include Asp290, Asp349, and Glu351. Residue Arg353 is part of the active site.

The protein belongs to the peptidase M17 family. Mn(2+) serves as cofactor.

It is found in the cytoplasm. It catalyses the reaction Release of an N-terminal amino acid, Xaa-|-Yaa-, in which Xaa is preferably Leu, but may be other amino acids including Pro although not Arg or Lys, and Yaa may be Pro. Amino acid amides and methyl esters are also readily hydrolyzed, but rates on arylamides are exceedingly low.. The enzyme catalyses Release of an N-terminal amino acid, preferentially leucine, but not glutamic or aspartic acids.. Its function is as follows. Presumably involved in the processing and regular turnover of intracellular proteins. Catalyzes the removal of unsubstituted N-terminal amino acids from various peptides. The protein is Probable cytosol aminopeptidase of Alkaliphilus oremlandii (strain OhILAs) (Clostridium oremlandii (strain OhILAs)).